The sequence spans 310 residues: MLVVEVANGRSLVWGAEAVQALRERLGVGGRTVGALPRGPRQNSRLGLPLLLMPEEARLLAEIGAVTLVSAPRPDSRHHSLALTSFKRQQEESFQEQSALAAEARETRRQELLEKITEGQAAKKQKLEQASGASSSQEAGSSQAAKEDETSDGQASGEQEEAGPSSSQAGPSNGVAPLPRSALLVQLATARPRPVKARPLDWRVQSKDWPHAGRPAHELRYSIYRDLWERGFFLSAAGKFGGDFLVYPGDPLRFHAHYIAQCWAPEDTIPLQDLVAAGRLGTSVRKTLLLCSPQPDGKVVYTSLQWASLQ.

The disordered stretch occupies residues 119–177 (GQAAKKQKLEQASGASSSQEAGSSQAAKEDETSDGQASGEQEEAGPSSSQAGPSNGVAP). A compositionally biased stretch (low complexity) spans 128–144 (EQASGASSSQEAGSSQA). Catalysis depends on residues Y247, H255, and K286.

The protein belongs to the tRNA-intron endonuclease family. TRNA splicing endonuclease is a heterotetramer composed of TSEN2, TSEN15, TSEN34/LENG5 and TSEN54. tRNA splicing endonuclease complex also contains proteins of the pre-mRNA 3'-end processing machinery such as CLP1, CPSF1, CPSF4 and CSTF2.

It localises to the nucleus. The protein resides in the nucleolus. It carries out the reaction pretRNA = a 3'-half-tRNA molecule with a 5'-OH end + a 5'-half-tRNA molecule with a 2',3'-cyclic phosphate end + an intron with a 2',3'-cyclic phosphate and a 5'-hydroxyl terminus.. In terms of biological role, constitutes one of the two catalytic subunit of the tRNA-splicing endonuclease complex, a complex responsible for identification and cleavage of the splice sites in pre-tRNA. It cleaves pre-tRNA at the 5'- and 3'-splice sites to release the intron. The products are an intron and two tRNA half-molecules bearing 2',3'-cyclic phosphate and 5'-OH termini. There are no conserved sequences at the splice sites, but the intron is invariably located at the same site in the gene, placing the splice sites an invariant distance from the constant structural features of the tRNA body. It probably carries the active site for 3'-splice site cleavage. The tRNA splicing endonuclease is also involved in mRNA processing via its association with pre-mRNA 3'-end processing factors, establishing a link between pre-tRNA splicing and pre-mRNA 3'-end formation, suggesting that the endonuclease subunits function in multiple RNA-processing events. In Homo sapiens (Human), this protein is tRNA-splicing endonuclease subunit Sen34 (TSEN34).